The primary structure comprises 178 residues: Large ribosomal subunit protein bL25 (178 aa).

It belongs to the bacterial ribosomal protein bL25 family. CTC subfamily. As to quaternary structure, part of the 50S ribosomal subunit; part of the 5S rRNA/L5/L18/L25 subcomplex. Contacts the 5S rRNA. Binds to the 5S rRNA independently of L5 and L18.

In terms of biological role, this is one of the proteins that binds to the 5S RNA in the ribosome where it forms part of the central protuberance. The chain is Large ribosomal subunit protein bL25 from Campylobacter hominis (strain ATCC BAA-381 / DSM 21671 / CCUG 45161 / LMG 19568 / NCTC 13146 / CH001A).